A 148-amino-acid polypeptide reads, in one-letter code: MNIIETLEAEQAAKLLAKRPIPAFQPGDTVIVNVKVKEGERTRVQAYEGVCIARNGGGLNESFTVRKISYGEGVERVFPIYSPNIDSIKVVRRGKVRRAKLYYLRDRRGKAARIAEKMETPAAKAAREAAKKEAKAAAKAKKAASAAE.

This sequence belongs to the bacterial ribosomal protein bL19 family.

Its function is as follows. This protein is located at the 30S-50S ribosomal subunit interface and may play a role in the structure and function of the aminoacyl-tRNA binding site. The polypeptide is Large ribosomal subunit protein bL19 (Beijerinckia indica subsp. indica (strain ATCC 9039 / DSM 1715 / NCIMB 8712)).